The following is a 200-amino-acid chain: RPW8-like protein 4 (200 aa).

The RPW8 domain occupies 1–157 (MPIAELAVIK…MKAIQVDQWT (157 aa)). Residues 7 to 29 (AVIKTVGGPLIAAALGVGAQVIY) traverse the membrane as a helical segment. Residues 70–127 (REVHESLTRLLEDAKSIIEKYWKLRWSRHVCRKYRYIKKLESIELELVRVAREIQVHQ) adopt a coiled-coil conformation.

This sequence belongs to the plant RPW8 protein family.

It is found in the membrane. Its function is as follows. Probable disease resistance (R) protein. This Arabidopsis thaliana (Mouse-ear cress) protein is RPW8-like protein 4 (HR4).